The primary structure comprises 1201 residues: DNA-directed RNA polymerase subunit beta' (1201 aa).

Zn(2+) is bound by residues C60, C62, C75, and C78. The Mg(2+) site is built by D449, D451, and D453. Zn(2+) contacts are provided by C818, C892, C899, and C902.

Belongs to the RNA polymerase beta' chain family. The RNAP catalytic core consists of 2 alpha, 1 beta, 1 beta' and 1 omega subunit. When a sigma factor is associated with the core the holoenzyme is formed, which can initiate transcription. Requires Mg(2+) as cofactor. It depends on Zn(2+) as a cofactor.

It carries out the reaction RNA(n) + a ribonucleoside 5'-triphosphate = RNA(n+1) + diphosphate. Functionally, DNA-dependent RNA polymerase catalyzes the transcription of DNA into RNA using the four ribonucleoside triphosphates as substrates. In Listeria monocytogenes serovar 1/2a (strain ATCC BAA-679 / EGD-e), this protein is DNA-directed RNA polymerase subunit beta'.